The chain runs to 189 residues: UPF0301 protein RF_0044 (189 aa).

This sequence belongs to the UPF0301 (AlgH) family.

This is UPF0301 protein RF_0044 from Rickettsia felis (strain ATCC VR-1525 / URRWXCal2) (Rickettsia azadi).